Reading from the N-terminus, the 479-residue chain is RAC-gamma serine/threonine-protein kinase (479 aa).

Position 2 is an N-acetylserine (S2). A PH domain is found at 5 to 107; it reads TIVKEGWVQK…WTEAIQAVAD (103 aa). A disulfide bridge links C59 with C76. A Protein kinase domain is found at 148 to 405; that stretch reads FDYLKLLGKG…AKEIMRHSFF (258 aa). Residues 154-162 and K177 contribute to the ATP site; that span reads LGKGTFGKV. The active-site Proton acceptor is D271. An intrachain disulfide couples C293 to C307. O-linked (GlcNAc) threonine glycosylation is present at T302. T305 bears the Phosphothreonine; by PDPK1 mark. T309 carries an O-linked (GlcNAc) threonine glycan. In terms of domain architecture, AGC-kinase C-terminal spans 406 to 479; sequence SGVNWQDVYD…QFSYSASGRE (74 aa). The segment at 445 to 479 is disordered; the sequence is TITPPEKYDDDGMDGMDNERRPHFPQFSYSASGRE. A Phosphothreonine modification is found at T447. S472 bears the Phosphoserine; by PKC/PRKCZ mark. A glycan (O-linked (GlcNAc) serine; alternate) is linked at S472.

Belongs to the protein kinase superfamily. AGC Ser/Thr protein kinase family. RAC subfamily. In terms of assembly, interacts (via PH domain) with TCL1A; this enhances AKT3 phosphorylation and activation. Interacts with TRAF6. Interacts with KCTD20. Interacts with BTBD10. In terms of processing, phosphorylation on Thr-305 and Ser-472 is required for full activity. Phosphorylation of the activation loop at Thr-305 by PDPK1/PDK1 is a prerequisite for full activation. Phosphorylation at Ser-472 by mTORC2 in response to growth factors plays a key role in AKT1 activation by facilitating subsequent phosphorylation of the activation loop by PDPK1/PDK1. Ubiquitinated. When fully phosphorylated and translocated into the nucleus, undergoes 'Lys-48'-polyubiquitination catalyzed by TTC3, leading to its degradation by the proteasome. Post-translationally, O-GlcNAcylation at Thr-302 and Thr-309 inhibits activating phosphorylation at Thr-305 via disrupting the interaction between AKT and PDPK1/PDK1. Isoform 1 is expressed in prostate, testis, uterus and mammary gland and isoform 2 is expressed in prostate, testis and mammary gland.

The protein resides in the nucleus. It is found in the cytoplasm. Its subcellular location is the membrane. It catalyses the reaction L-seryl-[protein] + ATP = O-phospho-L-seryl-[protein] + ADP + H(+). It carries out the reaction L-threonyl-[protein] + ATP = O-phospho-L-threonyl-[protein] + ADP + H(+). Its activity is regulated as follows. Two specific sites, one in the kinase domain (Thr-305) and the other in the C-terminal regulatory region (Ser-472), need to be phosphorylated for its full activation. IGF-1 leads to the activation of AKT3, which may play a role in regulating cell survival. Its function is as follows. AKT3 is one of 3 closely related serine/threonine-protein kinases (AKT1, AKT2 and AKT3) called the AKT kinase, and which regulate many processes including metabolism, proliferation, cell survival, growth and angiogenesis. This is mediated through serine and/or threonine phosphorylation of a range of downstream substrates. Over 100 substrate candidates have been reported so far, but for most of them, no isoform specificity has been reported. AKT3 is the least studied AKT isoform. It plays an important role in brain development and is crucial for the viability of malignant glioma cells. AKT3 isoform may also be the key molecule in up-regulation and down-regulation of MMP13 via IL13. Required for the coordination of mitochondrial biogenesis with growth factor-induced increases in cellular energy demands. Down-regulation by RNA interference reduces the expression of the phosphorylated form of BAD, resulting in the induction of caspase-dependent apoptosis. This Mus musculus (Mouse) protein is RAC-gamma serine/threonine-protein kinase (Akt3).